The chain runs to 415 residues: MTVPAPSQLDLRQEVHDAARRARVAARRLASLPTTVKDRALHAAADELLAHRDQILAANAEDLNAAREADTPAAMLDRLSLNPQRVDGIAAGLRQVAGLRDPVGEVLRGYTLPNGLQLRQQRVPLGVVGMIYEGRPNVTVDAFGLTLKSGNAALLRGSSSAAKSNEALVAVLRTALVGLELPADAVQLLSAADRATVTHLIQARGLVDVVIPRGGAGLIEAVVRDAQVPTIETGVGNCHVYVHQAADLDVAERILLNSKTRRPSVCNAAETLLVDAAIAETALPRLLAALQHAGVTVHLDPDEADLRREYLSLDIAVAVVDGVDAAIAHINEYGTGHTEAIVTTNLDAAQRFTEQIDAAAVMVNASTAFTDGEQFGFGAEIGISTQKLHARGPMGLPELTSTKWIAWGAGHTRPA.

This sequence belongs to the gamma-glutamyl phosphate reductase family.

The protein resides in the cytoplasm. It carries out the reaction L-glutamate 5-semialdehyde + phosphate + NADP(+) = L-glutamyl 5-phosphate + NADPH + H(+). It participates in amino-acid biosynthesis; L-proline biosynthesis; L-glutamate 5-semialdehyde from L-glutamate: step 2/2. Catalyzes the NADPH-dependent reduction of L-glutamate 5-phosphate into L-glutamate 5-semialdehyde and phosphate. The product spontaneously undergoes cyclization to form 1-pyrroline-5-carboxylate. This is Gamma-glutamyl phosphate reductase from Mycobacterium bovis (strain BCG / Pasteur 1173P2).